The following is a 472-amino-acid chain: MAVKSYQAGVTQYRQSYWQPDYMPLDTDILACFKITPQPGVDREEAAAAVAAESSCGTWTTVWTDLLTDLDYYKGRAYRLEDVPGDDTCYYAFIAYPIDLFEEGSVVNVFTSLVGNVFGFKAVRALRLEDLRFPIAYVKTCGGPPHGIQVERDKLNKYGRPLLGCTIKPKLGLSAKNYGRACYEALRGGLDFTKDDENINSQPFMRWRDRFDFVMEAVQKAEHETGERKGHYLNVTAPTPEEMYKRAEYAKEIRAPIIMHDYLAGGLCANAGLANWCRNNGMLLHIHRAMHAVIDRNPHHGIHFRVLTKILRLSGGDHLHTGTVVGKLEGDRASTLGWIDLLRESFVPEDRSRGIFFDQDWGSMPGGFAVASGGIHVWHMPALVTIFGDDSVLQFGGGTVGHPWGNALAHANRVALEACVQARGEGRHLEKEGKDLLTAAAAHSPELKIAMETWKEIKFEFETMDKLAVANK.

Residues Asn116 and Thr166 each contribute to the substrate site. Catalysis depends on Lys168, which acts as the Proton acceptor. Position 170 (Lys170) interacts with substrate. Residues Lys194, Asp196, and Glu197 each coordinate Mg(2+). At Lys194 the chain carries N6-carboxylysine. The active-site Proton acceptor is His287. Positions 288, 320, and 372 each coordinate substrate.

The protein belongs to the RuBisCO large chain family. Type I subfamily. Heterohexadecamer of 8 large chains and 8 small chains. Mg(2+) serves as cofactor.

The enzyme catalyses 2 (2R)-3-phosphoglycerate + 2 H(+) = D-ribulose 1,5-bisphosphate + CO2 + H2O. It catalyses the reaction D-ribulose 1,5-bisphosphate + O2 = 2-phosphoglycolate + (2R)-3-phosphoglycerate + 2 H(+). Its function is as follows. RuBisCO catalyzes two reactions: the carboxylation of D-ribulose 1,5-bisphosphate, the primary event in carbon dioxide fixation, as well as the oxidative fragmentation of the pentose substrate. Both reactions occur simultaneously and in competition at the same active site. The polypeptide is Ribulose bisphosphate carboxylase large chain (Nitrobacter vulgaris).